Here is a 171-residue protein sequence, read N- to C-terminus: ATP synthase subunit b (171 aa).

Residues 12–34 (FALNLNLFETNVINLAVVAFGLY) form a helical membrane-spanning segment.

This sequence belongs to the ATPase B chain family. As to quaternary structure, F-type ATPases have 2 components, F(1) - the catalytic core - and F(0) - the membrane proton channel. F(1) has five subunits: alpha(3), beta(3), gamma(1), delta(1), epsilon(1). F(0) has four main subunits: a(1), b(1), b'(1) and c(10-14). The alpha and beta chains form an alternating ring which encloses part of the gamma chain. F(1) is attached to F(0) by a central stalk formed by the gamma and epsilon chains, while a peripheral stalk is formed by the delta, b and b' chains.

It is found in the cellular thylakoid membrane. Functionally, f(1)F(0) ATP synthase produces ATP from ADP in the presence of a proton or sodium gradient. F-type ATPases consist of two structural domains, F(1) containing the extramembraneous catalytic core and F(0) containing the membrane proton channel, linked together by a central stalk and a peripheral stalk. During catalysis, ATP synthesis in the catalytic domain of F(1) is coupled via a rotary mechanism of the central stalk subunits to proton translocation. In terms of biological role, component of the F(0) channel, it forms part of the peripheral stalk, linking F(1) to F(0). The protein is ATP synthase subunit b of Prochlorococcus marinus (strain SARG / CCMP1375 / SS120).